A 100-amino-acid polypeptide reads, in one-letter code: Ubiquitin-related modifier 1 (100 aa).

Residue Gly100 is modified to 1-thioglycine. Residue Gly100 forms a Glycyl lysine isopeptide (Gly-Lys) (interchain with K-? in acceptor proteins) linkage.

This sequence belongs to the URM1 family. C-terminal thiocarboxylation occurs in 2 steps, it is first acyl-adenylated (-COAMP) via the hesA/moeB/thiF part of UBA4, then thiocarboxylated (-COSH) via the rhodanese domain of UBA4.

The protein localises to the cytoplasm. It functions in the pathway tRNA modification; 5-methoxycarbonylmethyl-2-thiouridine-tRNA biosynthesis. Functionally, acts as a sulfur carrier required for 2-thiolation of mcm(5)S(2)U at tRNA wobble positions of cytosolic tRNA(Lys), tRNA(Glu) and tRNA(Gln). Serves as sulfur donor in tRNA 2-thiolation reaction by being thiocarboxylated (-COSH) at its C-terminus by the MOCS3 homolog UBA4. The sulfur is then transferred to tRNA to form 2-thiolation of mcm(5)S(2)U. Prior mcm(5) tRNA modification by the elongator complex is required for 2-thiolation. Also acts as a ubiquitin-like protein (UBL) that is covalently conjugated via an isopeptide bond to lysine residues of target proteins such as AHP1. The thiocarboxylated form serves as substrate for conjugation and oxidative stress specifically induces the formation of UBL-protein conjugates. The polypeptide is Ubiquitin-related modifier 1 (Eremothecium gossypii (strain ATCC 10895 / CBS 109.51 / FGSC 9923 / NRRL Y-1056) (Yeast)).